The primary structure comprises 272 residues: 3-methyl-2-oxobutanoate hydroxymethyltransferase (272 aa).

Mg(2+) is bound by residues D42 and D86. 3-methyl-2-oxobutanoate contacts are provided by residues 42-43 (DS), D86, and K116. E118 lines the Mg(2+) pocket. E185 functions as the Proton acceptor in the catalytic mechanism.

This sequence belongs to the PanB family. As to quaternary structure, homodecamer; pentamer of dimers. It depends on Mg(2+) as a cofactor.

The protein resides in the cytoplasm. It catalyses the reaction 3-methyl-2-oxobutanoate + (6R)-5,10-methylene-5,6,7,8-tetrahydrofolate + H2O = 2-dehydropantoate + (6S)-5,6,7,8-tetrahydrofolate. Its pathway is cofactor biosynthesis; (R)-pantothenate biosynthesis; (R)-pantoate from 3-methyl-2-oxobutanoate: step 1/2. In terms of biological role, catalyzes the reversible reaction in which hydroxymethyl group from 5,10-methylenetetrahydrofolate is transferred onto alpha-ketoisovalerate to form ketopantoate. The chain is 3-methyl-2-oxobutanoate hydroxymethyltransferase from Prochlorococcus marinus (strain NATL1A).